A 151-amino-acid chain; its full sequence is MALYEHVYLARQDISAQQVEALTEQLKSVIESFQGKVTKVEYWGVKSLAYRIKKNRKAHFSLLNIEAPAAALTEMERQMGINEDVLRFMTLRVEEHEQGPSAMMRKRDDDDRGERGERPRGPRPERGERGERGERGPRRPREDNIGEEGLY.

The disordered stretch occupies residues 94–151; it reads EEHEQGPSAMMRKRDDDDRGERGERPRGPRPERGERGERGERGPRRPREDNIGEEGLY. Residues 105-144 are compositionally biased toward basic and acidic residues; it reads RKRDDDDRGERGERPRGPRPERGERGERGERGPRRPREDN.

Belongs to the bacterial ribosomal protein bS6 family.

Its function is as follows. Binds together with bS18 to 16S ribosomal RNA. The chain is Small ribosomal subunit protein bS6 from Beijerinckia indica subsp. indica (strain ATCC 9039 / DSM 1715 / NCIMB 8712).